The primary structure comprises 342 residues: viral G-protein coupled receptor (342 aa).

Residues 1 to 51 are Extracellular-facing; the sequence is MAAEDFLTIFLDDDESWNETLNMSGYDYSGNFSLEVSVCEMTTVVPYTWNV. Residues asparagine 18, asparagine 22, and asparagine 31 are each glycosylated (N-linked (GlcNAc...) asparagine; by host). A helical transmembrane segment spans residues 52–72; the sequence is GILSLIFLINVLGNGLVTYIF. The Cytoplasmic portion of the chain corresponds to 73 to 92; that stretch reads CKHRSRAGAIDILLLGICLN. Residues 93–113 traverse the membrane as a helical segment; the sequence is SLCLSISLLAEVLMFLFPNII. The Extracellular segment spans residues 114-121; the sequence is STGLCRLE. A helical membrane pass occupies residues 122–142; sequence IFFYYLYVYLDIFSVVCVSLV. The Cytoplasmic segment spans residues 143-159; the sequence is RYLLVAYSTRSWPKKQS. Residues 160 to 180 traverse the membrane as a helical segment; sequence LGWVLTSAALLIALVLSGDAC. Residues 181-217 lie on the Extracellular side of the membrane; the sequence is RHRSRVVDPVSKQAMCYENAGNMTADWRLHVRTVSVT. A helical membrane pass occupies residues 218-238; the sequence is AGFLLPLALLILFYALTWCVV. At 239 to 251 the chain is on the cytoplasmic side; the sequence is RRTKLQARRKVRG. The helical transmembrane segment at 252 to 272 threads the bilayer; the sequence is VIVAVVLLFFVFCFPYHVLNL. The Extracellular segment spans residues 273–293; sequence LDTLLRRRWIRDSCYTRGLIN. A helical transmembrane segment spans residues 294 to 314; that stretch reads VGLAVTSLLQALYSAVVPLIY. The Cytoplasmic portion of the chain corresponds to 315–342; sequence SCLGSLFRQRMYGLFQSLRQSFMSGATT.

Belongs to the G-protein coupled receptor 1 family. As to quaternary structure, interacts with protein K7; this interaction promotes vGPCR proteasomal degradation. Interacts with host CADM1; this interaction is essential for chronic NF-kappa-B activation.

Its subcellular location is the host cell membrane. Functionally, receptor that signals constitutively via several signaling pathways including PI3K/AKT as well as mitogen- and stress-activated/MAP kinases. Promotes host cell proliferation and survival, modulates cell migration, stimulates angiogenesis, and recruits inflammatory cells, both in expressing cells and in neighboring cells. Maintains chronic activation of NF-kappa-B via interaction with host CADM1. The sequence is that of viral G-protein coupled receptor (ORF74) from Human herpesvirus 8 type P (isolate GK18) (HHV-8).